The sequence spans 285 residues: MQLLDGKALSAKIETTVAKEVKELKNSTNLVPGLAVILVGQDPASAAYVNMKKKACDRVGFYSVTHEMPSDISQSAIENTITMMNNNPNIDGILIQLPLPTQIDTTKILELVEPSKDVDGFHPYNVGRLTTGLDGFVPCTPLGVMELLKEYKIDVKGKNCVVVGASNIVGKPMAALLLNANATVEICHIFTDDLKKHTLAADMIFVGAGVINLIKEDMVKGGAIIVDIGINRAESGKLVGDVDFENVAKKCSFITPVPGGVGPMTIAMLLSNTLKAAKAHAKENE.

NADP(+) is bound by residues 164–166 (GAS), isoleucine 189, and isoleucine 230.

It belongs to the tetrahydrofolate dehydrogenase/cyclohydrolase family. Homodimer.

It catalyses the reaction (6R)-5,10-methylene-5,6,7,8-tetrahydrofolate + NADP(+) = (6R)-5,10-methenyltetrahydrofolate + NADPH. The enzyme catalyses (6R)-5,10-methenyltetrahydrofolate + H2O = (6R)-10-formyltetrahydrofolate + H(+). It functions in the pathway one-carbon metabolism; tetrahydrofolate interconversion. Its function is as follows. Catalyzes the oxidation of 5,10-methylenetetrahydrofolate to 5,10-methenyltetrahydrofolate and then the hydrolysis of 5,10-methenyltetrahydrofolate to 10-formyltetrahydrofolate. The sequence is that of Bifunctional protein FolD from Sulfurimonas denitrificans (strain ATCC 33889 / DSM 1251) (Thiomicrospira denitrificans (strain ATCC 33889 / DSM 1251)).